Reading from the N-terminus, the 59-residue chain is Large ribosomal subunit protein uL30 (59 aa).

Belongs to the universal ribosomal protein uL30 family. As to quaternary structure, part of the 50S ribosomal subunit.

The chain is Large ribosomal subunit protein uL30 from Buchnera aphidicola subsp. Acyrthosiphon kondoi (Acyrthosiphon kondoi symbiotic bacterium).